We begin with the raw amino-acid sequence, 123 residues long: UPF0102 protein PSPPH_4120 (123 aa).

It belongs to the UPF0102 family.

The sequence is that of UPF0102 protein PSPPH_4120 from Pseudomonas savastanoi pv. phaseolicola (strain 1448A / Race 6) (Pseudomonas syringae pv. phaseolicola (strain 1448A / Race 6)).